The sequence spans 357 residues: DNA replication and repair protein RecF (357 aa).

30 to 37 serves as a coordination point for ATP; that stretch reads GANGSGKT.

The protein belongs to the RecF family.

The protein localises to the cytoplasm. The RecF protein is involved in DNA metabolism; it is required for DNA replication and normal SOS inducibility. RecF binds preferentially to single-stranded, linear DNA. It also seems to bind ATP. This chain is DNA replication and repair protein RecF, found in Escherichia fergusonii (strain ATCC 35469 / DSM 13698 / CCUG 18766 / IAM 14443 / JCM 21226 / LMG 7866 / NBRC 102419 / NCTC 12128 / CDC 0568-73).